The sequence spans 178 residues: ATP synthase subunit delta (178 aa).

It belongs to the ATPase delta chain family. F-type ATPases have 2 components, F(1) - the catalytic core - and F(0) - the membrane proton channel. F(1) has five subunits: alpha(3), beta(3), gamma(1), delta(1), epsilon(1). F(0) has three main subunits: a(1), b(2) and c(10-14). The alpha and beta chains form an alternating ring which encloses part of the gamma chain. F(1) is attached to F(0) by a central stalk formed by the gamma and epsilon chains, while a peripheral stalk is formed by the delta and b chains.

The protein resides in the cell inner membrane. Functionally, f(1)F(0) ATP synthase produces ATP from ADP in the presence of a proton or sodium gradient. F-type ATPases consist of two structural domains, F(1) containing the extramembraneous catalytic core and F(0) containing the membrane proton channel, linked together by a central stalk and a peripheral stalk. During catalysis, ATP synthesis in the catalytic domain of F(1) is coupled via a rotary mechanism of the central stalk subunits to proton translocation. In terms of biological role, this protein is part of the stalk that links CF(0) to CF(1). It either transmits conformational changes from CF(0) to CF(1) or is implicated in proton conduction. This chain is ATP synthase subunit delta, found in Acinetobacter baumannii (strain SDF).